Consider the following 211-residue polypeptide: Ras-related protein RABB1c (211 aa).

Residue serine 2 is modified to N-acetylserine. GTP is bound at residue 13–21 (GDTGVGKSC). The short motif at 35-43 (HDLTIGVEF) is the Effector region element. GTP contacts are provided by residues 61–65 (DTAGQ), 119–122 (NKCD), and 149–151 (SAK). S-geranylgeranyl cysteine attachment occurs at residues cysteine 209 and cysteine 210.

It belongs to the small GTPase superfamily. Rab family.

It is found in the cell membrane. Its function is as follows. Intracellular vesicle trafficking and protein transport. The protein is Ras-related protein RABB1c (RABB1C) of Arabidopsis thaliana (Mouse-ear cress).